Reading from the N-terminus, the 318-residue chain is tRNA U34 carboxymethyltransferase (318 aa).

Residues Lys88, Trp102, Lys107, Gly126, 176-177 (LE), Met192, Tyr196, and Arg311 each bind carboxy-S-adenosyl-L-methionine.

The protein belongs to the class I-like SAM-binding methyltransferase superfamily. CmoB family. As to quaternary structure, homotetramer.

The catalysed reaction is carboxy-S-adenosyl-L-methionine + 5-hydroxyuridine(34) in tRNA = 5-carboxymethoxyuridine(34) in tRNA + S-adenosyl-L-homocysteine + H(+). Catalyzes carboxymethyl transfer from carboxy-S-adenosyl-L-methionine (Cx-SAM) to 5-hydroxyuridine (ho5U) to form 5-carboxymethoxyuridine (cmo5U) at position 34 in tRNAs. The protein is tRNA U34 carboxymethyltransferase of Pseudomonas putida (strain W619).